The sequence spans 682 residues: Potassium-transporting ATPase ATP-binding subunit (682 aa).

4 consecutive transmembrane segments (helical) span residues 34–54, 58–78, 219–239, and 254–274; these read PVMF…LAMV, IAGS…TVLF, IALT…TATL, and VLVA…LSAI. Residue Asp307 is the 4-aspartylphosphate intermediate of the active site. ATP-binding positions include Asp344, Glu348, 377 to 384, and Lys395; that span reads FTAQSRMS. 2 residues coordinate Mg(2+): Asp518 and Asp522. The next 3 helical transmembrane spans lie at 588 to 608, 616 to 636, and 662 to 682; these read FAII…LNVM, AILS…PLAL, and LVVP…LGLA.

This sequence belongs to the cation transport ATPase (P-type) (TC 3.A.3) family. Type IA subfamily. The system is composed of three essential subunits: KdpA, KdpB and KdpC.

The protein resides in the cell inner membrane. It carries out the reaction K(+)(out) + ATP + H2O = K(+)(in) + ADP + phosphate + H(+). Part of the high-affinity ATP-driven potassium transport (or Kdp) system, which catalyzes the hydrolysis of ATP coupled with the electrogenic transport of potassium into the cytoplasm. This subunit is responsible for energy coupling to the transport system and for the release of the potassium ions to the cytoplasm. This chain is Potassium-transporting ATPase ATP-binding subunit, found in Salmonella enteritidis PT4 (strain P125109).